A 90-amino-acid chain; its full sequence is MLPEKLHNLPHNGKRIFYKFYDRSLRKFGSREVAVKLAVCAVRKKYTLVRGQWRARPDANDADTTSSSSSSETCTESDDSSDVPPARYAV.

A disordered region spans residues 53-90 (WRARPDANDADTTSSSSSSETCTESDDSSDVPPARYAV). Residues 63-74 (DTTSSSSSSETC) show a composition bias toward low complexity.

This is an uncharacterized protein from Orgyia pseudotsugata (Douglas-fir tussock moth).